The chain runs to 339 residues: BTB/POZ domain-containing protein KCTD9 (339 aa).

One can recognise a KHA domain in the interval 3–82 (RVTLFLNGSP…PQTDARPPGG (80 aa)). S11 carries the post-translational modification Phosphoserine. Positions 89-161 (DWLTLNVGGR…LRHGQLIVND (73 aa)) constitute a BTB domain. Pentapeptide repeat domains lie at 223–247 (ANLQ…NFED), 253–292 (ANLE…NLRG), and 293–327 (ATLA…IFEE).

As to quaternary structure, forms pentamers. Component of a complex mades of five KCTD9 and five CUL3 subunits.

The protein operates within protein modification; protein ubiquitination. Substrate-specific adapter of a BCR (BTB-CUL3-RBX1) E3 ubiquitin-protein ligase complex, which mediates the ubiquitination of target proteins, leading to their degradation by the proteasome. The protein is BTB/POZ domain-containing protein KCTD9 (Kctd9) of Mus musculus (Mouse).